The following is a 302-amino-acid chain: tRNA pseudouridine synthase B (302 aa).

Residue His-40 participates in substrate binding. Catalysis depends on Asp-45, which acts as the Nucleophile. Positions 73, 178, and 199 each coordinate substrate.

The protein belongs to the pseudouridine synthase TruB family. Type 1 subfamily.

The catalysed reaction is uridine(55) in tRNA = pseudouridine(55) in tRNA. Functionally, responsible for synthesis of pseudouridine from uracil-55 in the psi GC loop of transfer RNAs. The sequence is that of tRNA pseudouridine synthase B from Buchnera aphidicola subsp. Baizongia pistaciae (strain Bp).